The sequence spans 342 residues: Heat-inducible transcription repressor HrcA (342 aa).

This sequence belongs to the HrcA family.

Functionally, negative regulator of class I heat shock genes (grpE-dnaK-dnaJ and groELS operons). Prevents heat-shock induction of these operons. This is Heat-inducible transcription repressor HrcA from Leptospira borgpetersenii serovar Hardjo-bovis (strain JB197).